Consider the following 388-residue polypeptide: Lipid-A-disaccharide synthase (388 aa).

Belongs to the LpxB family.

The catalysed reaction is a lipid X + a UDP-2-N,3-O-bis[(3R)-3-hydroxyacyl]-alpha-D-glucosamine = a lipid A disaccharide + UDP + H(+). The protein operates within bacterial outer membrane biogenesis; LPS lipid A biosynthesis. Functionally, condensation of UDP-2,3-diacylglucosamine and 2,3-diacylglucosamine-1-phosphate to form lipid A disaccharide, a precursor of lipid A, a phosphorylated glycolipid that anchors the lipopolysaccharide to the outer membrane of the cell. The protein is Lipid-A-disaccharide synthase of Saccharophagus degradans (strain 2-40 / ATCC 43961 / DSM 17024).